The sequence spans 370 residues: Chloromuconate cycloisomerase (370 aa).

Catalysis depends on K165, which acts as the Proton acceptor. Mn(2+) contacts are provided by D194, E220, and D245. E323 functions as the Proton donor in the catalytic mechanism.

Belongs to the mandelate racemase/muconate lactonizing enzyme family. Mn(2+) serves as cofactor.

The enzyme catalyses 2-[(2R)-2-chloro-2,5-dihydro-5-oxofuryl]acetate = 3-chloro-cis,cis-muconate + H(+). It functions in the pathway aromatic compound metabolism; 3-chlorocatechol degradation. The sequence is that of Chloromuconate cycloisomerase (tfdD) from Delftia acidovorans (Pseudomonas acidovorans).